We begin with the raw amino-acid sequence, 99 residues long: High mobility group nucleosome-binding domain-containing protein 3 (99 aa).

Basic and acidic residues-rich tracts occupy residues 1–25 (MPKR…EPTR), 39–53 (PEPK…KEPG), and 62–72 (GKKEEKQEAGK). The interval 1–99 (MPKRKSPENT…KTESVDNEGE (99 aa)) is disordered. Residue S6 is modified to Phosphoserine. The residue at position 10 (T10) is a Phosphothreonine. 2 positions are modified to phosphoserine: S78 and S93. Residues 81 to 93 (GETKAEEAQKTES) are compositionally biased toward basic and acidic residues.

Belongs to the HMGN family. Interacts with the ligand binding domain of the thyroid receptor (TR) (in vitro). Requires the presence of thyroid hormone for its interaction. Interacts with transcriptional regulator SEHBP. Interacts with nucleosomes. Expressed in kidney, lung, pancreas, testis, skeletal muscle, heart, thyroid gland, pituitary gland, prostate and uterus. Low expression in liver, spleen, placenta and ovaries.

Its subcellular location is the nucleus. Its function is as follows. Binds to nucleosomes, regulating chromatin structure and consequently, chromatin-dependent processes such as transcription, DNA replication and DNA repair. Affects both insulin and glucagon levels and modulates the expression of pancreatic genes involved in insulin secretion. Regulates the expression of the glucose transporter SLC2A2 by binding specifically to its promoter region and recruiting PDX1 and additional transcription factors. Regulates the expression of SLC6A9, a glycine transporter which regulates the glycine concentration in synaptic junctions in the central nervous system, by binding to its transcription start site. May play a role in ocular development and astrocyte function. The chain is High mobility group nucleosome-binding domain-containing protein 3 (HMGN3) from Homo sapiens (Human).